The sequence spans 428 residues: Enolase (428 aa).

(2R)-2-phosphoglycerate is bound at residue Gln-164. The Proton donor role is filled by Glu-206. 3 residues coordinate Mg(2+): Asp-243, Glu-286, and Asp-313. Lys-338, Arg-367, Ser-368, and Lys-389 together coordinate (2R)-2-phosphoglycerate. Lys-338 functions as the Proton acceptor in the catalytic mechanism.

The protein belongs to the enolase family. Mg(2+) is required as a cofactor.

It is found in the cytoplasm. Its subcellular location is the secreted. The protein resides in the cell surface. The enzyme catalyses (2R)-2-phosphoglycerate = phosphoenolpyruvate + H2O. It functions in the pathway carbohydrate degradation; glycolysis; pyruvate from D-glyceraldehyde 3-phosphate: step 4/5. Catalyzes the reversible conversion of 2-phosphoglycerate (2-PG) into phosphoenolpyruvate (PEP). It is essential for the degradation of carbohydrates via glycolysis. The chain is Enolase from Dehalococcoides mccartyi (strain ATCC BAA-2100 / JCM 16839 / KCTC 5957 / BAV1).